Consider the following 92-residue polypeptide: Small ribosomal subunit protein uS19 (92 aa).

It belongs to the universal ribosomal protein uS19 family.

Functionally, protein S19 forms a complex with S13 that binds strongly to the 16S ribosomal RNA. This chain is Small ribosomal subunit protein uS19, found in Aeromonas hydrophila subsp. hydrophila (strain ATCC 7966 / DSM 30187 / BCRC 13018 / CCUG 14551 / JCM 1027 / KCTC 2358 / NCIMB 9240 / NCTC 8049).